Reading from the N-terminus, the 337-residue chain is Tryptophan--tRNA ligase (337 aa).

ATP is bound by residues 12–14 (QPS) and 21–22 (GN). Positions 13-22 (PSADSLHLGN) match the 'HIGH' region motif. Position 138 (Asp138) interacts with L-tryptophan. Residues 150 to 152 (GDD), Ile189, and 198 to 202 (KMSKS) each bind ATP. The 'KMSKS' region signature appears at 198 to 202 (KMSKS).

Belongs to the class-I aminoacyl-tRNA synthetase family. As to quaternary structure, homodimer.

It is found in the cytoplasm. It carries out the reaction tRNA(Trp) + L-tryptophan + ATP = L-tryptophyl-tRNA(Trp) + AMP + diphosphate + H(+). Catalyzes the attachment of tryptophan to tRNA(Trp). In Leifsonia xyli subsp. xyli (strain CTCB07), this protein is Tryptophan--tRNA ligase.